A 1989-amino-acid polypeptide reads, in one-letter code: Exophilin-5 (1989 aa).

The RabBD domain maps to Ala-7 to Ile-63. 2 disordered regions span residues Asn-93–Ser-117 and Thr-348–Ala-391. Polar residues-rich tracts occupy residues Thr-100–Lys-111 and His-359–Ser-376. The segment covering Asp-377–Leu-389 has biased composition (basic and acidic residues). Ser-603 is subject to Phosphoserine. Disordered stretches follow at residues Phe-631 to Val-651, Ser-806 to Gln-827, and Ala-882 to Asn-933. A compositionally biased stretch (polar residues) spans Pro-641–Val-651. Ser-806 and Ser-809 each carry phosphoserine. The segment covering Lys-891–Arg-909 has biased composition (polar residues). Positions Ser-910 to Ala-927 are enriched in basic and acidic residues. Phosphoserine is present on residues Ser-1028 and Ser-1086. Disordered regions lie at residues Glu-1094–Gly-1113, Ser-1124–Leu-1152, and Glu-1365–Gln-1493. The span at Arg-1098–Val-1110 shows a compositional bias: polar residues. Position 1124 is a phosphoserine (Ser-1124). Basic and acidic residues predominate over residues Ser-1379 to Gln-1390. Positions Ser-1416–Ser-1431 are enriched in low complexity. Over residues Asn-1434–Cys-1447 the composition is skewed to polar residues. Residue Ser-1505 is modified to Phosphoserine. Disordered stretches follow at residues Glu-1521–Ser-1590 and Pro-1644–Phe-1737. Basic and acidic residues-rich tracts occupy residues Glu-1551–Gln-1560, Asn-1573–Ser-1589, and Arg-1658–Glu-1670. Positions Thr-1685–Ser-1709 are enriched in polar residues. A phosphoserine mark is found at Ser-1753, Ser-1768, Ser-1821, and Ser-1851. The disordered stretch occupies residues Phe-1921–Leu-1989. The segment covering Ser-1933–Ser-1943 has biased composition (low complexity). Over residues Tyr-1959 to Leu-1989 the composition is skewed to acidic residues.

As to quaternary structure, interacts with RAB27A. Expressed in keratinocytes.

May act as Rab effector protein and play a role in vesicle trafficking. The protein is Exophilin-5 of Homo sapiens (Human).